Reading from the N-terminus, the 721-residue chain is Phosphoribosylformylglycinamidine synthase subunit PurL (721 aa).

Residue His-47 is part of the active site. ATP contacts are provided by Tyr-50 and Lys-89. Residue Glu-91 coordinates Mg(2+). Residues 92–95 (SHNH) and Arg-114 contribute to the substrate site. His-93 acts as the Proton acceptor in catalysis. Asp-115 contributes to the Mg(2+) binding site. Gln-238 provides a ligand contact to substrate. Asp-266 lines the Mg(2+) pocket. 310–312 (ESQ) is a binding site for substrate. ATP is bound by residues Asp-490 and Gly-527. Asn-528 lines the Mg(2+) pocket. Ser-530 provides a ligand contact to substrate.

It belongs to the FGAMS family. In terms of assembly, monomer. Part of the FGAM synthase complex composed of 1 PurL, 1 PurQ and 2 PurS subunits.

The protein resides in the cytoplasm. It catalyses the reaction N(2)-formyl-N(1)-(5-phospho-beta-D-ribosyl)glycinamide + L-glutamine + ATP + H2O = 2-formamido-N(1)-(5-O-phospho-beta-D-ribosyl)acetamidine + L-glutamate + ADP + phosphate + H(+). It participates in purine metabolism; IMP biosynthesis via de novo pathway; 5-amino-1-(5-phospho-D-ribosyl)imidazole from N(2)-formyl-N(1)-(5-phospho-D-ribosyl)glycinamide: step 1/2. Its function is as follows. Part of the phosphoribosylformylglycinamidine synthase complex involved in the purines biosynthetic pathway. Catalyzes the ATP-dependent conversion of formylglycinamide ribonucleotide (FGAR) and glutamine to yield formylglycinamidine ribonucleotide (FGAM) and glutamate. The FGAM synthase complex is composed of three subunits. PurQ produces an ammonia molecule by converting glutamine to glutamate. PurL transfers the ammonia molecule to FGAR to form FGAM in an ATP-dependent manner. PurS interacts with PurQ and PurL and is thought to assist in the transfer of the ammonia molecule from PurQ to PurL. The sequence is that of Phosphoribosylformylglycinamidine synthase subunit PurL from Ruegeria sp. (strain TM1040) (Silicibacter sp.).